Consider the following 150-residue polypeptide: Cell division protein SepF (150 aa).

It belongs to the SepF family. As to quaternary structure, homodimer. Interacts with FtsZ.

It localises to the cytoplasm. In terms of biological role, cell division protein that is part of the divisome complex and is recruited early to the Z-ring. Probably stimulates Z-ring formation, perhaps through the cross-linking of FtsZ protofilaments. Its function overlaps with FtsA. The chain is Cell division protein SepF from Clostridium botulinum (strain Kyoto / Type A2).